A 213-amino-acid polypeptide reads, in one-letter code: Imidazoleglycerol-phosphate dehydratase (213 aa).

Belongs to the imidazoleglycerol-phosphate dehydratase family.

It is found in the cytoplasm. The enzyme catalyses D-erythro-1-(imidazol-4-yl)glycerol 3-phosphate = 3-(imidazol-4-yl)-2-oxopropyl phosphate + H2O. It functions in the pathway amino-acid biosynthesis; L-histidine biosynthesis; L-histidine from 5-phospho-alpha-D-ribose 1-diphosphate: step 6/9. This is Imidazoleglycerol-phosphate dehydratase from Trichodesmium erythraeum (strain IMS101).